The following is a 415-amino-acid chain: Phosphopentomutase (415 aa).

Mn(2+) contacts are provided by aspartate 10, aspartate 313, histidine 318, aspartate 354, histidine 355, and histidine 366.

Belongs to the phosphopentomutase family. The cofactor is Mn(2+).

It localises to the cytoplasm. It carries out the reaction 2-deoxy-alpha-D-ribose 1-phosphate = 2-deoxy-D-ribose 5-phosphate. The catalysed reaction is alpha-D-ribose 1-phosphate = D-ribose 5-phosphate. It participates in carbohydrate degradation; 2-deoxy-D-ribose 1-phosphate degradation; D-glyceraldehyde 3-phosphate and acetaldehyde from 2-deoxy-alpha-D-ribose 1-phosphate: step 1/2. Its function is as follows. Isomerase that catalyzes the conversion of deoxy-ribose 1-phosphate (dRib-1-P) and ribose 1-phosphate (Rib-1-P) to deoxy-ribose 5-phosphate (dRib-5-P) and ribose 5-phosphate (Rib-5-P), respectively. This Psychromonas ingrahamii (strain DSM 17664 / CCUG 51855 / 37) protein is Phosphopentomutase.